A 302-amino-acid polypeptide reads, in one-letter code: Sulfate adenylyltransferase subunit 2 (302 aa).

Belongs to the PAPS reductase family. CysD subfamily. As to quaternary structure, heterodimer composed of CysD, the smaller subunit, and CysN.

The enzyme catalyses sulfate + ATP + H(+) = adenosine 5'-phosphosulfate + diphosphate. It functions in the pathway sulfur metabolism; hydrogen sulfide biosynthesis; sulfite from sulfate: step 1/3. In terms of biological role, with CysN forms the ATP sulfurylase (ATPS) that catalyzes the adenylation of sulfate producing adenosine 5'-phosphosulfate (APS) and diphosphate, the first enzymatic step in sulfur assimilation pathway. APS synthesis involves the formation of a high-energy phosphoric-sulfuric acid anhydride bond driven by GTP hydrolysis by CysN coupled to ATP hydrolysis by CysD. The protein is Sulfate adenylyltransferase subunit 2 of Xanthomonas euvesicatoria pv. vesicatoria (strain 85-10) (Xanthomonas campestris pv. vesicatoria).